The chain runs to 313 residues: MMLDVAPPRFRVEEEDERHGIFVAEPLPRGLGHTLGNALRRVMLSGLPGAAVTKLRIEGVQHEFSTIEGVREDVVDIILNVKQLKFRLERDEPIELQISKDGPGEVRGSDIELKADVEVVNPDAYIASLSEGGHLDMTLTVERGQGYVPAEQNKSDADPIGVIAVDSLFSPVEKVQYRVSETRAGARVDLDALTLEVFTDGRLGPREALREASRKLIDFFGLFAEGYQGAGAAEEPGRSGGRPVITDERPIEDLELTVRSYNCLKREGVDTIGQLATMTEEELMNIRNLGMKSVDEIRSKLEEYGYTLESGRE.

Positions 1–227 (MMLDVAPPRF…DFFGLFAEGY (227 aa)) are alpha N-terminal domain (alpha-NTD). An alpha C-terminal domain (alpha-CTD) region spans residues 242–313 (RPVITDERPI…YGYTLESGRE (72 aa)).

Belongs to the RNA polymerase alpha chain family. As to quaternary structure, homodimer. The RNAP catalytic core consists of 2 alpha, 1 beta, 1 beta' and 1 omega subunit. When a sigma factor is associated with the core the holoenzyme is formed, which can initiate transcription.

The enzyme catalyses RNA(n) + a ribonucleoside 5'-triphosphate = RNA(n+1) + diphosphate. DNA-dependent RNA polymerase catalyzes the transcription of DNA into RNA using the four ribonucleoside triphosphates as substrates. In Rubrobacter xylanophilus (strain DSM 9941 / JCM 11954 / NBRC 16129 / PRD-1), this protein is DNA-directed RNA polymerase subunit alpha.